The following is a 59-amino-acid chain: Large ribosomal subunit protein bL32 (59 aa).

Over residues 1–19 the composition is skewed to basic residues; the sequence is MAQPKKKTSKSRRNMRRSH. The tract at residues 1 to 20 is disordered; sequence MAQPKKKTSKSRRNMRRSHD.

The protein belongs to the bacterial ribosomal protein bL32 family.

The sequence is that of Large ribosomal subunit protein bL32 from Maridesulfovibrio salexigens (strain ATCC 14822 / DSM 2638 / NCIMB 8403 / VKM B-1763) (Desulfovibrio salexigens).